A 386-amino-acid polypeptide reads, in one-letter code: CRISPR system endoribonuclease Csm6' (386 aa).

A CARF domain region spans residues 1-146; the sequence is MRVLISAVGD…ASNENIGHDN (146 aa). Residues 147–386 form an HEPN domain region; that stretch reads DENIDELIEV…LNKILLTKLN (240 aa).

This sequence belongs to the CRISPR-associated Csm6 family. In terms of assembly, homodimer. The composite ssRNase active site is formed at the dimer interface.

Its activity is regulated as follows. Non-specific ssRNase activity is stimulated about 1000-fold by cyclic oligoadenylate (cOA), a second messenger produced by Cas10 of the ternary Csm effector complex in the presence of a cognate target RNA. Its function is as follows. CRISPR (clustered regularly interspaced short palindromic repeat) is an adaptive immune system that provides protection against mobile genetic elements (viruses, transposable elements and conjugative plasmids). CRISPR clusters contain spacers, sequences complementary to antecedent mobile elements, and target invading nucleic acids. CRISPR clusters are transcribed and processed into CRISPR RNA (crRNA). The type III-A Csm complex binds crRNA and acts as a crRNA-guided RNase, DNase and cyclic oligoadenylate synthase; binding of target RNA cognate to the crRNA is required for all activities. In a heterologous host this Csm effector complex restricts ssRNA phage MS2, suggesting it may target RNA viruses in vivo. This protein is not part of the Csm complex. Functionally, csm functions as a non-specific ssDNase. Base-pairing between crRNA and target RNA to form a ternary Csm complex activates a ssDNase activity; target RNA cleavage suppresses the ssDNase, a temporal control that prevents uncontrolled DNA degradation. Viral RNA transcripts probably tether the Csm complex to the viral genome, recruiting Cas10 ssDNA activity which is able to degrade DNA in the transcription bubble, spatially controlling the DNase activity. In terms of biological role, a single-strand-specific endoribonuclease (ssRNase) that is approximately 1000-fold stimulated by cyclic oligoadenylate (cOA); although several species of cOA are synthesized by this organism only cyclic hexaadenylate (cA6) stimulates the ssRNase activity. Cleaves preferentially within GA or AA dinucleotides, although the presence of cA6 broadens the preference. This Streptococcus thermophilus protein is CRISPR system endoribonuclease Csm6'.